We begin with the raw amino-acid sequence, 372 residues long: Glutamate 5-kinase (372 aa).

Residue K14 participates in ATP binding. Substrate is bound by residues S54, D141, and N153. An ATP-binding site is contributed by T173–D174. The 79-residue stretch at R280–L358 folds into the PUA domain.

The protein belongs to the glutamate 5-kinase family.

Its subcellular location is the cytoplasm. The enzyme catalyses L-glutamate + ATP = L-glutamyl 5-phosphate + ADP. It participates in amino-acid biosynthesis; L-proline biosynthesis; L-glutamate 5-semialdehyde from L-glutamate: step 1/2. Functionally, catalyzes the transfer of a phosphate group to glutamate to form L-glutamate 5-phosphate. The protein is Glutamate 5-kinase of Cupriavidus taiwanensis (strain DSM 17343 / BCRC 17206 / CCUG 44338 / CIP 107171 / LMG 19424 / R1) (Ralstonia taiwanensis (strain LMG 19424)).